Reading from the N-terminus, the 465-residue chain is Phosphomethylpyrimidine synthase (465 aa).

Substrate is bound by residues Asn80, Met109, Tyr139, His175, 195–197 (SRG), 236–239 (DSLR), and Glu275. Zn(2+) is bound at residue His279. Substrate is bound at residue Tyr302. His343 is a Zn(2+) binding site. 3 residues coordinate [4Fe-4S] cluster: Cys423, Cys426, and Cys431.

Belongs to the ThiC family. Requires [4Fe-4S] cluster as cofactor.

The catalysed reaction is 5-amino-1-(5-phospho-beta-D-ribosyl)imidazole + S-adenosyl-L-methionine = 4-amino-2-methyl-5-(phosphooxymethyl)pyrimidine + CO + 5'-deoxyadenosine + formate + L-methionine + 3 H(+). It functions in the pathway cofactor biosynthesis; thiamine diphosphate biosynthesis. Catalyzes the synthesis of the hydroxymethylpyrimidine phosphate (HMP-P) moiety of thiamine from aminoimidazole ribotide (AIR) in a radical S-adenosyl-L-methionine (SAM)-dependent reaction. This is Phosphomethylpyrimidine synthase from Synechococcus sp. (strain CC9311).